An 88-amino-acid polypeptide reads, in one-letter code: Small ribosomal subunit protein bS20 (88 aa).

Disordered regions lie at residues 1–23 and 65–88; these read MANT…VNKA and GVMH…SLSA.

It belongs to the bacterial ribosomal protein bS20 family.

In terms of biological role, binds directly to 16S ribosomal RNA. The chain is Small ribosomal subunit protein bS20 from Rhizobium meliloti (strain 1021) (Ensifer meliloti).